A 451-amino-acid polypeptide reads, in one-letter code: uncharacterized protein (451 aa).

Residues aspartate 305, aspartate 316, histidine 384, glutamate 414, and glutamate 428 each contribute to the Mn(2+) site.

This sequence belongs to the peptidase M24B family. It depends on Mn(2+) as a cofactor.

This is an uncharacterized protein from Schizosaccharomyces pombe (strain 972 / ATCC 24843) (Fission yeast).